Here is a 62-residue protein sequence, read N- to C-terminus: Conotoxin reg3.5 (62 aa).

The first 22 residues, 1–22, serve as a signal peptide directing secretion; the sequence is MMFKLGVLLTICLLLFPLTGTA. A propeptide spanning residues 23-49 is cleaved from the precursor; that stretch reads LDGDQLAEHMLDISSGINDRWFDPVRK. 3 disulfide bridges follow: cysteine 50/cysteine 60, cysteine 51/cysteine 58, and cysteine 56/cysteine 61.

Belongs to the conotoxin M superfamily. Expressed by the venom duct.

Its subcellular location is the secreted. This Conus regius (Crown cone) protein is Conotoxin reg3.5.